Here is a 510-residue protein sequence, read N- to C-terminus: NAD(P)H-quinone oxidoreductase subunit 2 A, chloroplastic (510 aa).

14 consecutive transmembrane segments (helical) span residues 31–51 (FIFP…IDLT), 59–79 (WFYF…LFRW), 99–119 (IFQF…VEYI), 124–144 (MAIT…MFLC), 149–169 (LITI…LSGY), 184–204 (LLMG…LYGL), 229–249 (ISIA…LAPF), 261–281 (PTPV…ALAT), 295–315 (WHLL…LLAI), 323–343 (MLAY…IVGD), 354–374 (YMLF…LFGL), 395–415 (ALSL…AGFF), 418–438 (LYLF…IGLL), and 484–504 (MTVC…ILAI).

This sequence belongs to the complex I subunit 2 family. In terms of assembly, NDH is composed of at least 16 different subunits, 5 of which are encoded in the nucleus.

It localises to the plastid. Its subcellular location is the chloroplast thylakoid membrane. It carries out the reaction a plastoquinone + NADH + (n+1) H(+)(in) = a plastoquinol + NAD(+) + n H(+)(out). The catalysed reaction is a plastoquinone + NADPH + (n+1) H(+)(in) = a plastoquinol + NADP(+) + n H(+)(out). NDH shuttles electrons from NAD(P)H:plastoquinone, via FMN and iron-sulfur (Fe-S) centers, to quinones in the photosynthetic chain and possibly in a chloroplast respiratory chain. The immediate electron acceptor for the enzyme in this species is believed to be plastoquinone. Couples the redox reaction to proton translocation, and thus conserves the redox energy in a proton gradient. This is NAD(P)H-quinone oxidoreductase subunit 2 A, chloroplastic from Saccharum hybrid (Sugarcane).